Consider the following 71-residue polypeptide: MRTEQITAKALKQIGDDRYKLSLIVAKRAEALANGAQALIEGDTSKMKFADIALMEVAEGKIGLEAIVEGK.

The protein belongs to the RNA polymerase subunit omega family. In terms of assembly, the RNAP catalytic core consists of 2 alpha, 1 beta, 1 beta' and 1 omega subunit. When a sigma factor is associated with the core the holoenzyme is formed, which can initiate transcription.

The enzyme catalyses RNA(n) + a ribonucleoside 5'-triphosphate = RNA(n+1) + diphosphate. In terms of biological role, promotes RNA polymerase assembly. Latches the N- and C-terminal regions of the beta' subunit thereby facilitating its interaction with the beta and alpha subunits. This is DNA-directed RNA polymerase subunit omega from Campylobacter curvus (strain 525.92).